The chain runs to 72 residues: Protein kish (72 aa).

Positions 1-26 (MVAIFNFQSLLVVILLFICTCTYIRG) are cleaved as a signal peptide. The Extracellular portion of the chain corresponds to 27–47 (SYPSLLEVRDKHSFSGLPRKA). A helical membrane pass occupies residues 48–68 (AIIGERLSPWVSACCLIMGLW). At 69–72 (TLYN) the chain is on the cytoplasmic side.

Belongs to the KISH family.

Its subcellular location is the golgi apparatus membrane. In terms of biological role, involved in the early part of the secretory pathway. The chain is Protein kish (tmem167) from Dictyostelium discoideum (Social amoeba).